The chain runs to 735 residues: Translation factor GUF1 homolog, chloroplastic (735 aa).

Disordered stretches follow at residues 1–38 (MAVP…PSTS) and 106–126 (PENA…GVDN). Residues 1–47 (MAVPTIPSPACISQSANGSIISTRRSTETNPRQHPSTSYRCAGRVVR) constitute a chloroplast transit peptide. Residues 11–38 (CISQSANGSIISTRRSTETNPRQHPSTS) are compositionally biased toward polar residues. Positions 106–115 (PENAEKDYSK) are enriched in basic and acidic residues. One can recognise a tr-type G domain in the interval 137 to 319 (SNIRNFSIIA…AVVKKIPPPK (183 aa)). GTP-binding positions include 146–153 (AHIDHGKS), 212–216 (DTPGH), and 266–269 (NKID).

The protein belongs to the TRAFAC class translation factor GTPase superfamily. Classic translation factor GTPase family. LepA subfamily.

Its subcellular location is the plastid. It is found in the chloroplast. The catalysed reaction is GTP + H2O = GDP + phosphate + H(+). In terms of biological role, promotes chloroplast protein synthesis. May act as a fidelity factor of the translation reaction, by catalyzing a one-codon backward translocation of tRNAs on improperly translocated ribosomes. The polypeptide is Translation factor GUF1 homolog, chloroplastic (Physcomitrium patens (Spreading-leaved earth moss)).